The primary structure comprises 155 residues: Egg cell-secreted protein 1.5 (155 aa).

The signal sequence occupies residues 1–32 (MATKSTSKPLLLSFLMMSYLISTFHVITVAEG).

Belongs to the plant egg cell-secreted peptide family. Restricted to female reproductive tissues, specifically accumulating in storage vesicles of the unfertilized egg cell.

The protein resides in the cytoplasmic vesicle. It localises to the secreted. Involved in the regulation of gamete interactions during the double fertilization and to prevent multiple-pollen tube attraction; mediates the redistribution of the gamete fusogen HAP2/GCS1 to the cell surface after secretion upon sperm arrival. This is Egg cell-secreted protein 1.5 (EC1.5) from Arabidopsis thaliana (Mouse-ear cress).